We begin with the raw amino-acid sequence, 194 residues long: ATP-dependent Clp protease proteolytic subunit (194 aa).

The Nucleophile role is filled by serine 98. The active site involves histidine 123.

The protein belongs to the peptidase S14 family. In terms of assembly, fourteen ClpP subunits assemble into 2 heptameric rings which stack back to back to give a disk-like structure with a central cavity, resembling the structure of eukaryotic proteasomes.

The protein localises to the cytoplasm. The catalysed reaction is Hydrolysis of proteins to small peptides in the presence of ATP and magnesium. alpha-casein is the usual test substrate. In the absence of ATP, only oligopeptides shorter than five residues are hydrolyzed (such as succinyl-Leu-Tyr-|-NHMec, and Leu-Tyr-Leu-|-Tyr-Trp, in which cleavage of the -Tyr-|-Leu- and -Tyr-|-Trp bonds also occurs).. In terms of biological role, cleaves peptides in various proteins in a process that requires ATP hydrolysis. Has a chymotrypsin-like activity. Plays a major role in the degradation of misfolded proteins. The sequence is that of ATP-dependent Clp protease proteolytic subunit from Acetivibrio thermocellus (strain ATCC 27405 / DSM 1237 / JCM 9322 / NBRC 103400 / NCIMB 10682 / NRRL B-4536 / VPI 7372) (Clostridium thermocellum).